The primary structure comprises 450 residues: Chromosomal replication initiator protein DnaA (450 aa).

The tract at residues 1-69 is domain I, interacts with DnaA modulators; sequence MHDVWRQATE…VGALSVTAGK (69 aa). A domain II region spans residues 69–113; the sequence is KKYFIELVVQEEDQNAEVPQAEDLIIKGHQEIEQPVTSQPETSSS. A domain III, AAA+ region region spans residues 114–330; that stretch reads SLNPKYTFEL…GMLIRLGAYS (217 aa). The ATP site is built by G158, G160, K161, and S162. Positions 331-450 are domain IV, binds dsDNA; that stretch reads SLQGIPITLD…IEDIKLILLK (120 aa).

This sequence belongs to the DnaA family. As to quaternary structure, oligomerizes as a right-handed, spiral filament on DNA at oriC.

It localises to the cytoplasm. In terms of biological role, plays an essential role in the initiation and regulation of chromosomal replication. ATP-DnaA binds to the origin of replication (oriC) to initiate formation of the DNA replication initiation complex once per cell cycle. Binds the DnaA box (a 9 base pair repeat at the origin) and separates the double-stranded (ds)DNA. Forms a right-handed helical filament on oriC DNA; dsDNA binds to the exterior of the filament while single-stranded (ss)DNA is stabiized in the filament's interior. The ATP-DnaA-oriC complex binds and stabilizes one strand of the AT-rich DNA unwinding element (DUE), permitting loading of DNA polymerase. After initiation quickly degrades to an ADP-DnaA complex that is not apt for DNA replication. Binds acidic phospholipids. This chain is Chromosomal replication initiator protein DnaA, found in Pelobacter propionicus (strain DSM 2379 / NBRC 103807 / OttBd1).